The following is a 174-amino-acid chain: Cytochrome c oxidase subunit 5A, mitochondrial (174 aa).

The N-terminal 29 residues, 1 to 29 (MASLTRAVTRLAIAGRQAVRTIATTTPVS), are a transit peptide targeting the mitochondrion.

It belongs to the cytochrome c oxidase subunit 5A family. In terms of assembly, component of the cytochrome c oxidase (complex IV, CIV), a multisubunit enzyme composed of a catalytic core of 3 subunits and several supernumerary subunits. The complex exists as a monomer or a dimer and forms supercomplexes (SCs) in the inner mitochondrial membrane with ubiquinol-cytochrome c oxidoreductase (cytochrome b-c1 complex, complex III, CIII).

Its subcellular location is the mitochondrion inner membrane. It functions in the pathway energy metabolism; oxidative phosphorylation. In terms of biological role, component of the cytochrome c oxidase, the last enzyme in the mitochondrial electron transport chain which drives oxidative phosphorylation. The respiratory chain contains 3 multisubunit complexes succinate dehydrogenase (complex II, CII), ubiquinol-cytochrome c oxidoreductase (cytochrome b-c1 complex, complex III, CIII) and cytochrome c oxidase (complex IV, CIV), that cooperate to transfer electrons derived from NADH and succinate to molecular oxygen, creating an electrochemical gradient over the inner membrane that drives transmembrane transport and the ATP synthase. Cytochrome c oxidase is the component of the respiratory chain that catalyzes the reduction of oxygen to water. Electrons originating from reduced cytochrome c in the intermembrane space (IMS) are transferred via the dinuclear copper A center (CU(A)) of subunit 2 and heme A of subunit 1 to the active site in subunit 1, a binuclear center (BNC) formed by heme A3 and copper B (CU(B)). The BNC reduces molecular oxygen to 2 water molecules using 4 electrons from cytochrome c in the IMS and 4 protons from the mitochondrial matrix. In Caenorhabditis elegans, this protein is Cytochrome c oxidase subunit 5A, mitochondrial.